Here is an 89-residue protein sequence, read N- to C-terminus: Small ribosomal subunit protein uS15 (89 aa).

The tract at residues 1–24 is disordered; sequence MSLDTTEKQQLINSHQTHATDTGS. Polar residues predominate over residues 8–24; sequence KQQLINSHQTHATDTGS.

It belongs to the universal ribosomal protein uS15 family. In terms of assembly, part of the 30S ribosomal subunit. Forms a bridge to the 50S subunit in the 70S ribosome, contacting the 23S rRNA.

One of the primary rRNA binding proteins, it binds directly to 16S rRNA where it helps nucleate assembly of the platform of the 30S subunit by binding and bridging several RNA helices of the 16S rRNA. Functionally, forms an intersubunit bridge (bridge B4) with the 23S rRNA of the 50S subunit in the ribosome. In Synechococcus sp. (strain CC9311), this protein is Small ribosomal subunit protein uS15.